The primary structure comprises 87 residues: Small ribosomal subunit protein bS20 (87 aa).

Belongs to the bacterial ribosomal protein bS20 family.

Functionally, binds directly to 16S ribosomal RNA. In Lachnoclostridium phytofermentans (strain ATCC 700394 / DSM 18823 / ISDg) (Clostridium phytofermentans), this protein is Small ribosomal subunit protein bS20.